A 326-amino-acid polypeptide reads, in one-letter code: tRNA-modifying protein YgfZ (326 aa).

Residues Trp27 and Trp189 each coordinate folate.

This sequence belongs to the tRNA-modifying YgfZ family.

Its subcellular location is the cytoplasm. Functionally, folate-binding protein involved in regulating the level of ATP-DnaA and in the modification of some tRNAs. It is probably a key factor in regulatory networks that act via tRNA modification, such as initiation of chromosomal replication. The polypeptide is tRNA-modifying protein YgfZ (Escherichia coli O7:K1 (strain IAI39 / ExPEC)).